A 268-amino-acid polypeptide reads, in one-letter code: uncharacterized protein (268 aa).

This is an uncharacterized protein from Haemophilus influenzae (strain ATCC 51907 / DSM 11121 / KW20 / Rd).